The following is a 37-amino-acid chain: Large ribosomal subunit protein bL36c (37 aa).

It belongs to the bacterial ribosomal protein bL36 family.

It is found in the plastid. The sequence is that of Large ribosomal subunit protein bL36c from Aneura mirabilis (Parasitic liverwort).